We begin with the raw amino-acid sequence, 330 residues long: MKIAIDAMGGDHAPKAVVLGAMKAIKEYSDLHITLVGKEEEIRQYLTSEERITILHTDEKIESTDEPVRAVRRKKQASMVLAAQQVKDGVADACISAGSTGALMAAGLFVVGRMEGIERPALSPTMPTVDGEGFVMLDVGANVDAKPIHLYQYAVMGSVYAEKVRGIKNPRVGLLNVGTEDGKGNELSKQVFAMLKDAPINFVGNVESRDLLQGVADVVVCDGFTGNVALKSLEGTALALFSMLKEQLMSSFTSKLAAAVLKPKLMVLKDKMDYSEYGGAALFGLKAPVIKAHGSSNDQSIFSAIRQTREMVAKEVIPTISSVMEKEPLQ.

It belongs to the PlsX family. In terms of assembly, homodimer. Probably interacts with PlsY.

It is found in the cytoplasm. The enzyme catalyses a fatty acyl-[ACP] + phosphate = an acyl phosphate + holo-[ACP]. Its pathway is lipid metabolism; phospholipid metabolism. Functionally, catalyzes the reversible formation of acyl-phosphate (acyl-PO(4)) from acyl-[acyl-carrier-protein] (acyl-ACP). This enzyme utilizes acyl-ACP as fatty acyl donor, but not acyl-CoA. The sequence is that of Phosphate acyltransferase from Bacillus thuringiensis (strain Al Hakam).